Consider the following 297-residue polypeptide: Manganese efflux system protein MneP (297 aa).

Helical transmembrane passes span 12 to 32, 43 to 63, 85 to 105, 111 to 131, 155 to 175, and 177 to 197; these read VALI…FFGL, GIHS…IGIS, IVGI…ILSF, VPQY…EILY, GDIV…IGNS, and GWSY…YLIF.

It belongs to the cation diffusion facilitator (CDF) transporter (TC 2.A.4) family.

It localises to the cell membrane. In terms of biological role, primary efflux pump for manganese. May prevent manganese intoxication. The chain is Manganese efflux system protein MneP from Bacillus subtilis (strain 168).